Here is a 276-residue protein sequence, read N- to C-terminus: uncharacterized protein (276 aa).

Transmembrane regions (helical) follow at residues 5–25, 32–52, 64–84, 104–124, 149–169, 193–213, and 244–264; these read TDLI…GMLA, PLVG…GFVG, GVIL…LLAV, AGLA…GLAL, IAVG…VLLP, LWVT…VMLV, and VGIA…GAFF.

The protein belongs to the monovalent cation:proton antiporter 2 (CPA2) transporter (TC 2.A.37) family.

The protein resides in the cell membrane. This is an uncharacterized protein from Methylorubrum extorquens (Methylobacterium dichloromethanicum).